The primary structure comprises 949 residues: Thrombospondin-4-B (949 aa).

The N-terminal stretch at 1–22 (MAGTMHLLTAVSLILMLSSANA) is a signal peptide. The 176-residue stretch at 23–198 (ESTVYNLLTS…LEELKLAYGD (176 aa)) folds into the Laminin G-like domain. Disulfide bonds link Cys276–Cys287, Cys281–Cys296, Cys299–Cys310, Cys316–Cys327, Cys321–Cys336, Cys339–Cys363, Cys369–Cys383, Cys377–Cys392, Cys395–Cys407, Cys413–Cys427, Cys421–Cys437, Cys439–Cys450, Cys466–Cys471, Cys476–Cys496, Cys512–Cys532, Cys535–Cys555, Cys571–Cys591, Cys594–Cys614, Cys632–Cys652, Cys672–Cys692, and Cys708–Cys929. An EGF-like 1; calcium-binding domain is found at 312 to 349 (DVDECQFNPCFPGVRCVNMAPGFRCEACPLGFTGKPLE). The EGF-like 2; calcium-binding domain maps to 365–408 (DIDECKGPDNGGCTANSICVNSVGSYQCGRCKTGFTGDQIRGCK). The 43-residue stretch at 409 to 451 (PEKSCGNRLQNPCDPNAQCTEERDGTITCQCGIGWAGNGYLCG) folds into the EGF-like 3 domain. 8 TSP type-3 repeats span residues 452–484 (KDTDIDGYPDERLRCRDPTCRKDNCVTVPNSGQ), 485–520 (EDADGDGKGDACDPDADGDGILNEQDNCWLTPNINQ), 521–543 (QNSDKDSHGDACDNCVRVDNPDQ), 544–579 (RDTDSDGLGDACDDDMDGDGLKNFLDNCQRVKNRDQ), 580–602 (LDRDGDGVGDACDSCPDIPNPNQ), 603–640 (SDIDNDLVGDSCDTNQDSDGDGHQDSKDNCPMVINSSQ), 641–680 (LDTDKDGIGDECDDDDDNDGIPDSLPPGPDNCRLVPNPEQ), and 681–716 (IDDNNDGVGDICESDFDQDKVIDRIDNCPENAEITL). Residues 578 to 671 (DQLDRDGDGV…PDSLPPGPDN (94 aa)) form a disordered region. N-linked (GlcNAc...) asparagine glycans are attached at residues Asn601 and Asn637. Residues 649–660 (GDECDDDDDNDG) are compositionally biased toward acidic residues. The region spanning 720-934 (RAYQTVVLDP…LKYRCNDTIP (215 aa)) is the TSP C-terminal domain. An N-linked (GlcNAc...) asparagine glycan is attached at Asn930.

It belongs to the thrombospondin family. Homotrimer; disulfide-linked.

It localises to the endoplasmic reticulum. The protein localises to the sarcoplasmic reticulum. It is found in the secreted. The protein resides in the extracellular space. Its subcellular location is the extracellular matrix. Functionally, adhesive glycoprotein that mediates cell-to-cell and cell-to-matrix interactions and may be involved in various processes including cellular proliferation, migration, adhesion and attachment. May play a role in ER stress response. The protein is Thrombospondin-4-B (thbs4b) of Danio rerio (Zebrafish).